A 205-amino-acid polypeptide reads, in one-letter code: Large ribosomal subunit protein uL4 (205 aa).

Belongs to the universal ribosomal protein uL4 family. Part of the 50S ribosomal subunit.

Functionally, one of the primary rRNA binding proteins, this protein initially binds near the 5'-end of the 23S rRNA. It is important during the early stages of 50S assembly. It makes multiple contacts with different domains of the 23S rRNA in the assembled 50S subunit and ribosome. Forms part of the polypeptide exit tunnel. The chain is Large ribosomal subunit protein uL4 from Dinoroseobacter shibae (strain DSM 16493 / NCIMB 14021 / DFL 12).